A 411-amino-acid polypeptide reads, in one-letter code: MHSRILLLLLMFAFNVGLINCGQSLVSPQSNCKIRCENGGMCVFDLERPDFHSCICLLGVYTGDRCQIRIAPEDIETTATSDETSHPMNIQHQQSQADIDDARRRDDERKREYERQVAERTRKEKEDRERASDEERRRQQHEQYWKEETARREQQRAEAERRIQEQRVRDDERRRQHEAERSQIEERRREEESRRLAAQRETDEARVRDEERRRQETEKEVEKELNDKRTQSMNEQFEYEGGDEEYPQVAEKEDEYDEGYETDNTEDVTITTTKTTKLMKPMVEESKGVDGDDGSDMIMEKDEMEDDKEPIRKEDEKLIDSIKHVFNKAVDETVKEHPIEEDEYWDETSKKTDEDSWTAENEGTKKTEEADEYGMEEGTEGWMMVKKENENAAVGTTVSLITVTFLFTLIF.

The N-terminal stretch at 1-21 is a signal peptide; that stretch reads MHSRILLLLLMFAFNVGLINC. The EGF-like domain maps to 28-67; it reads PQSNCKIRCENGGMCVFDLERPDFHSCICLLGVYTGDRCQ. Disulfide bonds link Cys-32–Cys-42, Cys-36–Cys-54, and Cys-56–Cys-66. A compositionally biased stretch (polar residues) spans 78-97; sequence TATSDETSHPMNIQHQQSQA. Disordered regions lie at residues 78-312 and 337-375; these read TATS…EPIR and HPIEEDEYWDETSKKTDEDSWTAENEGTKKTEEADEYGM. A compositionally biased stretch (basic and acidic residues) spans 100–230; that stretch reads DDARRRDDER…VEKELNDKRT (131 aa). Over residues 237 to 266 the composition is skewed to acidic residues; that stretch reads FEYEGGDEEYPQVAEKEDEYDEGYETDNTE. Low complexity predominate over residues 267-276; it reads DVTITTTKTT.

This is an uncharacterized protein from Caenorhabditis elegans.